We begin with the raw amino-acid sequence, 141 residues long: Large ribosomal subunit protein uL11 (141 aa).

It belongs to the universal ribosomal protein uL11 family. Part of the ribosomal stalk of the 50S ribosomal subunit. Interacts with L10 and the large rRNA to form the base of the stalk. L10 forms an elongated spine to which L12 dimers bind in a sequential fashion forming a multimeric L10(L12)X complex. One or more lysine residues are methylated.

Its function is as follows. Forms part of the ribosomal stalk which helps the ribosome interact with GTP-bound translation factors. The protein is Large ribosomal subunit protein uL11 of Agathobacter rectalis (strain ATCC 33656 / DSM 3377 / JCM 17463 / KCTC 5835 / VPI 0990) (Eubacterium rectale).